Here is a 380-residue protein sequence, read N- to C-terminus: Cytochrome b (380 aa).

4 helical membrane passes run 33 to 53 (FGSL…FLAM), 77 to 98 (WLIR…FLHV), 113 to 133 (WNMG…GYVL), and 178 to 198 (FFAF…VHLL). 2 residues coordinate heme b: H83 and H97. Heme b contacts are provided by H182 and H196. H201 is an a ubiquinone binding site. The next 4 helical transmembrane spans lie at 226 to 246 (IKDF…TLFF), 288 to 308 (LGGV…PLLH), 320 to 340 (ITQI…WIGG), and 347 to 367 (FITI…IFMP).

Belongs to the cytochrome b family. The cytochrome bc1 complex contains 11 subunits: 3 respiratory subunits (MT-CYB, CYC1 and UQCRFS1), 2 core proteins (UQCRC1 and UQCRC2) and 6 low-molecular weight proteins (UQCRH/QCR6, UQCRB/QCR7, UQCRQ/QCR8, UQCR10/QCR9, UQCR11/QCR10 and a cleavage product of UQCRFS1). This cytochrome bc1 complex then forms a dimer. Requires heme b as cofactor.

The protein resides in the mitochondrion inner membrane. Functionally, component of the ubiquinol-cytochrome c reductase complex (complex III or cytochrome b-c1 complex) that is part of the mitochondrial respiratory chain. The b-c1 complex mediates electron transfer from ubiquinol to cytochrome c. Contributes to the generation of a proton gradient across the mitochondrial membrane that is then used for ATP synthesis. In Microtus oregoni (Creeping vole), this protein is Cytochrome b (MT-CYB).